A 214-amino-acid chain; its full sequence is Ribosomal RNA small subunit methyltransferase G (214 aa).

Residues Gly56, Phe61, 107 to 108 (IE), and Arg125 each bind S-adenosyl-L-methionine.

This sequence belongs to the methyltransferase superfamily. RNA methyltransferase RsmG family.

It localises to the cytoplasm. Its function is as follows. Specifically methylates the N7 position of a guanine in 16S rRNA. In Syntrophomonas wolfei subsp. wolfei (strain DSM 2245B / Goettingen), this protein is Ribosomal RNA small subunit methyltransferase G.